The sequence spans 381 residues: CCN family member 1 (381 aa).

An N-terminal signal peptide occupies residues 1–24 (MSSRIARALALVVTLLHLTRLALS). Positions 25 to 94 (TCPAACHCPL…TALKGICRAQ (70 aa)) constitute an IGFBP N-terminal domain. Cystine bridges form between cysteine 26/cysteine 50, cysteine 30/cysteine 52, cysteine 32/cysteine 53, cysteine 39/cysteine 56, cysteine 64/cysteine 78, and cysteine 70/cysteine 91. Residues 98 to 164 (RPCEYNSRIY…GQCCEEWVCD (67 aa)) form the VWFC domain. The residue at position 188 (serine 188) is a Phosphoserine; by FAM20C. Residues 228-273 (KCIVQTTSWSQCSKTCGTGISTRVTNDNPECRLVKETRICEVRPCG) enclose the TSP type-1 domain. Positions 279–315 (SLKKGKKCSKTKKSPEPVRFTYAGCLSVKKYRPKYCG) are heparin-binding. 5 disulfide bridges follow: cysteine 286–cysteine 323, cysteine 303–cysteine 337, cysteine 314–cysteine 353, cysteine 317–cysteine 355, and cysteine 322–cysteine 359. The CTCK domain maps to 286 to 360 (CSKTKKSPEP…QSCKCNYNCP (75 aa)).

Belongs to the CCN family. In terms of assembly, interaction with integrins is heparin- and cell-type-dependent and promotes cell adhesion. In skin fibroblasts it binds ITGA6/ITGB1, in endothelial cells, binds ITGAV/ITGB3 and in platelets, ITGA2B/ITGB3. Binds, in vitro, ITGAV/ITGB5.

The protein resides in the secreted. Functionally, promotes cell proliferation, chemotaxis, angiogenesis and cell adhesion. Appears to play a role in wound healing by up-regulating, in skin fibroblasts, the expression of a number of genes involved in angiogenesis, inflammation and matrix remodeling including VEGA-A, VEGA-C, MMP1, MMP3, TIMP1, uPA, PAI-1 and integrins alpha-3 and alpha-5. CCN1-mediated gene regulation is dependent on heparin-binding. Down-regulates the expression of alpha-1 and alpha-2 subunits of collagen type-1. Promotes cell adhesion and adhesive signaling through integrin alpha-6/beta-1, cell migration through integrin alpha-v/beta-5 and cell proliferation through integrin alpha-v/beta-3. The protein is CCN family member 1 of Homo sapiens (Human).